A 337-amino-acid polypeptide reads, in one-letter code: MFPFVPLSLYVAKKLFRARGFRFCQKPGVLALAPEVDPCSIQHEVTGAETPHEELQYLRQLREILCRGSDRLDRTGIGTLSLFGMQARYSLRDHFPLLTTKRVFWRGVVQELLWFLKGSTDSRELSRTGVKIWDKNGSREFLAGRGLAHRREGDLGPVYGFQWRHFGAAYVDADADYTGQGFDQLSYIVDLIKNNPHDRRIIMCAWNPADLSLMALPPCHLLCQFYVADGELSCQLYQRSGDMGLGVPFNIASYSLLTYMLAHVTGLRPGEFIHTLGDAHIYKTHIEPLRLQLTRTPRPFPRLEILRSVSSMEEFTPDDFRLVDYCPHPTIRMEMAV.

DUMP-binding positions include arginine 74 and 199–200 (RR). Residue cysteine 219 is the Nucleophile of the active site. DUMP is bound by residues 239 to 242 (RSGD), asparagine 250, and 280 to 282 (HIY). Aspartate 242 serves as a coordination point for (6R)-5,10-methylene-5,6,7,8-tetrahydrofolate. Alanine 336 lines the (6R)-5,10-methylene-5,6,7,8-tetrahydrofolate pocket.

It belongs to the thymidylate synthase family. Homodimer.

The catalysed reaction is dUMP + (6R)-5,10-methylene-5,6,7,8-tetrahydrofolate = 7,8-dihydrofolate + dTMP. It participates in pyrimidine metabolism; dTTP biosynthesis. The sequence is that of Thymidylate synthase (70) from Homo sapiens (Human).